The chain runs to 162 residues: Phenazine biosynthesis protein PhzA1 (162 aa).

This sequence belongs to the PhzA/PhzB family.

Its pathway is antibiotic biosynthesis; phenazine biosynthesis. Functionally, involved in the biosynthesis of the antibiotic phenazine, a nitrogen-containing heterocyclic molecule. PhzA1 (operon phzA1B1C1E1F1G1) has a role in the biosynthesis of the phenazine during planktonic growth. This Pseudomonas aeruginosa (strain ATCC 15692 / DSM 22644 / CIP 104116 / JCM 14847 / LMG 12228 / 1C / PRS 101 / PAO1) protein is Phenazine biosynthesis protein PhzA1.